We begin with the raw amino-acid sequence, 514 residues long: Peptide chain release factor 3 (514 aa).

The tr-type G domain occupies 8–268 (KKRRTFAIIS…TFLKFAPEPH (261 aa)). GTP contacts are provided by residues 17–24 (SHPDAGKT), 85–89 (DTPGH), and 139–142 (NKLD).

This sequence belongs to the TRAFAC class translation factor GTPase superfamily. Classic translation factor GTPase family. PrfC subfamily.

It is found in the cytoplasm. Increases the formation of ribosomal termination complexes and stimulates activities of RF-1 and RF-2. It binds guanine nucleotides and has strong preference for UGA stop codons. It may interact directly with the ribosome. The stimulation of RF-1 and RF-2 is significantly reduced by GTP and GDP, but not by GMP. This is Peptide chain release factor 3 from Streptococcus thermophilus (strain ATCC BAA-491 / LMD-9).